The following is a 287-amino-acid chain: Glycine--tRNA ligase alpha subunit (287 aa).

It belongs to the class-II aminoacyl-tRNA synthetase family. Tetramer of two alpha and two beta subunits.

The protein resides in the cytoplasm. The enzyme catalyses tRNA(Gly) + glycine + ATP = glycyl-tRNA(Gly) + AMP + diphosphate. The sequence is that of Glycine--tRNA ligase alpha subunit from Campylobacter curvus (strain 525.92).